The primary structure comprises 509 residues: Cytochrome P450 4X1 (509 aa).

Residues 14 to 34 form a helical membrane-spanning segment; it reads FYLAFVFCLALGLLQAIKLYL. Position 454 (Cys-454) interacts with heme.

The protein belongs to the cytochrome P450 family. Requires heme as cofactor. As to expression, expressed in brain, heart, kidney and skin and, at lower levels, in skeletal muscle and liver. In the brain, high levels are detected in amygdala and lower levels in globus pallidus and cerebellum. In the heart, very high levels in aorta, but very low levels in other heart regions. Also expressed in breast, prostate and colon.

It localises to the endoplasmic reticulum membrane. Its subcellular location is the microsome membrane. It carries out the reaction N-(5Z,8Z,11Z,14Z-eicosatetraenoyl)-ethanolamine + reduced [NADPH--hemoprotein reductase] + O2 = N-(14,15-epoxy-5Z,8Z,11Z-eicosatrienoyl)-ethanolamine + oxidized [NADPH--hemoprotein reductase] + H2O + H(+). Its function is as follows. A cytochrome P450 monooxygenase that selectively catalyzes the epoxidation of the last double bond of the arachidonoyl moiety of anandamide, potentially modulating endocannabinoid signaling. Has no hydroxylase activity toward various fatty acids, steroids and prostaglandins. Mechanistically, uses molecular oxygen inserting one oxygen atom into a substrate, and reducing the second into a water molecule, with two electrons provided by NADPH via cytochrome P450 reductase (CPR; NADPH-ferrihemoprotein reductase). This is Cytochrome P450 4X1 from Homo sapiens (Human).